A 79-amino-acid polypeptide reads, in one-letter code: Cytochrome b (79 aa).

A run of 3 helical transmembrane segments spans residues 1–7 (TAMFLAM), 31–52 (WLIR…YLHI), and 67–79 (WNVG…LTMM). 2 residues coordinate heme b: His37 and His51.

It belongs to the cytochrome b family. In terms of assembly, the cytochrome bc1 complex contains 3 respiratory subunits (MT-CYB, CYC1 and UQCRFS1), 2 core proteins (UQCRC1 and UQCRC2) and probably 6 low-molecular weight proteins. The cofactor is heme b.

The protein localises to the mitochondrion inner membrane. Its function is as follows. Component of the ubiquinol-cytochrome c reductase complex (complex III or cytochrome b-c1 complex) that is part of the mitochondrial respiratory chain. The b-c1 complex mediates electron transfer from ubiquinol to cytochrome c. Contributes to the generation of a proton gradient across the mitochondrial membrane that is then used for ATP synthesis. The protein is Cytochrome b (mt-cyb) of Hypsophrys nicaraguensis (Moga).